The sequence spans 149 residues: Chromophore lyase CpcS/CpeS homolog (149 aa).

This sequence belongs to the CpcS/CpeS biliprotein lyase family.

Its subcellular location is the plastid. The protein resides in the chloroplast. Its function is as follows. Might function to covalently attach a chromophore to Cys residue(s) of phycobiliproteins. The chain is Chromophore lyase CpcS/CpeS homolog from Pyropia yezoensis (Susabi-nori).